Reading from the N-terminus, the 142-residue chain is Transcriptional regulator MraZ (142 aa).

SpoVT-AbrB domains are found at residues 5–51 and 77–120; these read ASAL…PRPE and AMDV…DSQT.

This sequence belongs to the MraZ family. As to quaternary structure, forms oligomers.

It localises to the cytoplasm. The protein resides in the nucleoid. This chain is Transcriptional regulator MraZ, found in Burkholderia multivorans (strain ATCC 17616 / 249).